Consider the following 396-residue polypeptide: Elongation factor Tu 2 (396 aa).

The tr-type G domain maps to 10–206 (KPHVNIGTIG…AVDSYIPTPQ (197 aa)). The G1 stretch occupies residues 19-26 (GHVDHGKT). 19 to 26 (GHVDHGKT) is a binding site for GTP. Residue Thr26 participates in Mg(2+) binding. Residues 60 to 64 (GITIS) form a G2 region. Positions 81 to 84 (DCPG) are G3. GTP is bound by residues 81–85 (DCPGH) and 136–139 (NKVD). The tract at residues 136-139 (NKVD) is G4. Positions 174–176 (SAL) are G5.

This sequence belongs to the TRAFAC class translation factor GTPase superfamily. Classic translation factor GTPase family. EF-Tu/EF-1A subfamily. Monomer.

It localises to the cytoplasm. It carries out the reaction GTP + H2O = GDP + phosphate + H(+). In terms of biological role, GTP hydrolase that promotes the GTP-dependent binding of aminoacyl-tRNA to the A-site of ribosomes during protein biosynthesis. In Myxococcus xanthus (strain DK1622), this protein is Elongation factor Tu 2.